Here is a 617-residue protein sequence, read N- to C-terminus: Na(+)/H(+) antiporter NhaA 1 (617 aa).

The interval 1 to 26 (MTVTEPATQRGFPLLPSRLSRGSKAT) is disordered. Positions 1-433 (MTVTEPATQR…GWAIFRITDW (433 aa)) are na(+)/H(+) antiporter NhaA. 11 helical membrane passes run 33 to 53 (AAAL…SPWA), 75 to 95 (MTVK…IVGL), 113 to 133 (AVPV…FLAF), 141 to 161 (HAWG…LAII), 171 to 191 (LFLL…IAVL), 198 to 218 (VAPL…RYLP), 234 to 254 (IALY…ALLI), 304 to 324 (VSPV…AGVL), 341 to 361 (GIVA…TWLI), 378 to 398 (IAGG…IVDI), and 411 to 431 (IGVL…FRIT). The Thioredoxin domain occupies 434-617 (LSPPEPVGLK…LIRALEAGRG (184 aa)).

In the N-terminal section; belongs to the NhaA Na(+)/H(+) (TC 2.A.33) antiporter family.

The protein resides in the cell membrane. It catalyses the reaction Na(+)(in) + 2 H(+)(out) = Na(+)(out) + 2 H(+)(in). In terms of biological role, na(+)/H(+) antiporter that extrudes sodium in exchange for external protons. This Mycolicibacterium gilvum (strain PYR-GCK) (Mycobacterium gilvum (strain PYR-GCK)) protein is Na(+)/H(+) antiporter NhaA 1.